Here is a 496-residue protein sequence, read N- to C-terminus: Protein RepR (496 aa).

Residues 120–141 (SDILTTAIDLGFMPTLIIKSDK) mediate DNA binding.

In terms of biological role, essential for replication. This Streptococcus agalactiae protein is Protein RepR (repR).